Reading from the N-terminus, the 537-residue chain is Putative cysteine ligase BshC (537 aa).

Residues 415–439 are a coiled coil; sequence EKASNNFINEVEEMKIQQQELYNNL.

The protein belongs to the BshC family.

Its function is as follows. Involved in bacillithiol (BSH) biosynthesis. May catalyze the last step of the pathway, the addition of cysteine to glucosamine malate (GlcN-Mal) to generate BSH. This is Putative cysteine ligase BshC from Staphylococcus epidermidis (strain ATCC 12228 / FDA PCI 1200).